Consider the following 1293-residue polypeptide: Putative DNA-directed RNA polymerase 008R (1293 aa).

Cysteine 61, cysteine 64, cysteine 71, histidine 74, cysteine 99, cysteine 102, and cysteine 123 together coordinate Zn(2+). A DNA-binding region spans residues 270–339 (TNRKPMAGIK…PVMVTPFNVS (70 aa)). Residues 354–376 (EMRDGTVHRPSEWRPSHGDHMET) are compositionally biased toward basic and acidic residues. Positions 354-390 (EMRDGTVHRPSEWRPSHGDHMETADGSPLGRVTRPSY) are disordered. Positions 474, 476, and 478 each coordinate Mg(2+). The alpha-amanitin binding stretch occupies residues 724 to 734 (GQQYVGGSRPG). The bridging helix stretch occupies residues 776 to 788 (PREVFFHAKSGRE).

This sequence belongs to the RNA polymerase beta' chain family.

It carries out the reaction RNA(n) + a ribonucleoside 5'-triphosphate = RNA(n+1) + diphosphate. Component of the DNA-dependent RNA polymerase that catalyzes the transcription of DNA into RNA using the four ribonucleoside triphosphates as substrates. Largest and catalytic component of RNA polymerase II which synthesizes mRNA precursors and many functional non-coding RNAs. Forms the polymerase active center together with the second largest subunit. This is Putative DNA-directed RNA polymerase 008R from Frog virus 3 (isolate Goorha) (FV-3).